Here is a 267-residue protein sequence, read N- to C-terminus: Glucosamine-6-phosphate deaminase (267 aa).

The Proton acceptor; for enolization step role is filled by D72. D141 acts as the For ring-opening step in catalysis. H143 (proton acceptor; for ring-opening step) is an active-site residue. E148 (for ring-opening step) is an active-site residue.

It belongs to the glucosamine/galactosamine-6-phosphate isomerase family. NagB subfamily.

The enzyme catalyses alpha-D-glucosamine 6-phosphate + H2O = beta-D-fructose 6-phosphate + NH4(+). The protein operates within amino-sugar metabolism; N-acetylneuraminate degradation; D-fructose 6-phosphate from N-acetylneuraminate: step 5/5. With respect to regulation, allosterically activated by N-acetylglucosamine 6-phosphate (GlcNAc6P). Catalyzes the reversible isomerization-deamination of glucosamine 6-phosphate (GlcN6P) to form fructose 6-phosphate (Fru6P) and ammonium ion. This Borrelia hermsii (strain HS1 / DAH) protein is Glucosamine-6-phosphate deaminase.